Consider the following 440-residue polypeptide: Proline--tRNA ligase (440 aa).

Belongs to the class-II aminoacyl-tRNA synthetase family. ProS type 2 subfamily. Homodimer.

It localises to the cytoplasm. The enzyme catalyses tRNA(Pro) + L-proline + ATP = L-prolyl-tRNA(Pro) + AMP + diphosphate. Its function is as follows. Catalyzes the attachment of proline to tRNA(Pro) in a two-step reaction: proline is first activated by ATP to form Pro-AMP and then transferred to the acceptor end of tRNA(Pro). The protein is Proline--tRNA ligase of Agrobacterium fabrum (strain C58 / ATCC 33970) (Agrobacterium tumefaciens (strain C58)).